Consider the following 289-residue polypeptide: Myoblast determination protein 1 homolog A (289 aa).

In terms of domain architecture, bHLH spans 95 to 146; sequence DRRKAATMRERRRLSKVNEAFETLKRYTSTNPNQRLPKVEILRNAIRYIESL. The tract at residues 165–212 is disordered; the sequence is SGDSDASSPRSNCSDGMMDYNSPPCGSRRRNSYDSSFYSDSPNDSRLG. 2 stretches are compositionally biased toward polar residues: residues 168–178 and 197–208; these read SDASSPRSNCS and YDSSFYSDSPND.

Efficient DNA binding requires dimerization with another bHLH protein.

It localises to the nucleus. In terms of biological role, may act as a transcriptional activator that promotes transcription of muscle-specific target genes and plays a role in muscle differentiation. The polypeptide is Myoblast determination protein 1 homolog A (myod1-a) (Xenopus laevis (African clawed frog)).